The sequence spans 201 residues: Natural cytotoxicity triggering receptor 3 (201 aa).

An N-terminal signal peptide occupies residues 1 to 18 (MAWMLLLILIMVHPGSCA). An Ig-like domain is found at 19-126 (LWVSQPPEIR…VGTGNGTRLV (108 aa)). Residues 19–135 (LWVSQPPEIR…VVEKEHPQLG (117 aa)) are Extracellular-facing. A disulfide bond links Cys-39 and Cys-108. 2 N-linked (GlcNAc...) asparagine glycosylation sites follow: Asn-42 and Asn-121. Residues 136–156 (AGTVLLLRAGFYAVSFLSVAV) form a helical membrane-spanning segment. Residues 157 to 201 (GSTVYYQGKCLTWKGPRRQLPAVVPAPLPPPCGSSAQLLPPVPGG) are Cytoplasmic-facing.

It belongs to the natural cytotoxicity receptor (NCR) family. Homodimer in the unliganted form. Interacts with CD3Z. Interacts with and is activated by binding to NCR3LG1. Interacts with and is activated by binding to BAG6. Interacts with and is inhibited by binding to LGALS3.

The protein localises to the cell membrane. Functionally, cell membrane receptor of natural killer/NK cells that is activated by binding of extracellular ligands including BAG6 and NCR3LG1. Stimulates NK cells cytotoxicity toward neighboring cells producing these ligands. It controls, for instance, NK cells cytotoxicity against tumor cells. Engagement of NCR3 by BAG6 also promotes myeloid dendritic cells (DC) maturation, both through killing DCs that did not acquire a mature phenotype, and inducing the release by NK cells of TNFA and IFNG that promote DC maturation. The chain is Natural cytotoxicity triggering receptor 3 (NCR3) from Pan troglodytes (Chimpanzee).